The following is a 171-amino-acid chain: UPF0398 protein SPy_1647/M5005_Spy1353 (171 aa).

This sequence belongs to the UPF0398 family.

The sequence is that of UPF0398 protein SPy_1647/M5005_Spy1353 from Streptococcus pyogenes serotype M1.